The sequence spans 367 residues: Putative zinc metalloprotease mll0638 (367 aa).

Histidine 20 contacts Zn(2+). Glutamate 21 is a catalytic residue. Histidine 24 is a Zn(2+) binding site. Transmembrane regions (helical) follow at residues 108-130 (ATVV…VLFA), 291-313 (LGFE…LNLL), and 343-365 (MAYR…NDLF). Positions 121–196 (TIVVFSVLFA…ITFVMLRDGK (76 aa)) constitute a PDZ domain.

This sequence belongs to the peptidase M50B family. Zn(2+) is required as a cofactor.

The protein resides in the cell inner membrane. The chain is Putative zinc metalloprotease mll0638 from Mesorhizobium japonicum (strain LMG 29417 / CECT 9101 / MAFF 303099) (Mesorhizobium loti (strain MAFF 303099)).